The following is a 566-amino-acid chain: DNA ligase B (566 aa).

The N6-AMP-lysine intermediate role is filled by Lys-125.

It belongs to the NAD-dependent DNA ligase family. LigB subfamily.

It catalyses the reaction NAD(+) + (deoxyribonucleotide)n-3'-hydroxyl + 5'-phospho-(deoxyribonucleotide)m = (deoxyribonucleotide)n+m + AMP + beta-nicotinamide D-nucleotide.. Its function is as follows. Catalyzes the formation of phosphodiester linkages between 5'-phosphoryl and 3'-hydroxyl groups in double-stranded DNA using NAD as a coenzyme and as the energy source for the reaction. The sequence is that of DNA ligase B from Pseudomonas putida (strain ATCC 700007 / DSM 6899 / JCM 31910 / BCRC 17059 / LMG 24140 / F1).